The chain runs to 440 residues: Origin recognition complex subunit 4 (440 aa).

Residue 64–71 participates in ATP binding; the sequence is GPKGSGKS.

The protein belongs to the ORC4 family. In terms of assembly, ORC is composed of six subunits.

It is found in the nucleus. In terms of biological role, component of the origin recognition complex (ORC) that binds origins of replication. DNA-binding is ATP-dependent, however specific DNA sequences that define origins of replication have not been identified so far. ORC is required to assemble the pre-replication complex necessary to initiate DNA replication. This chain is Origin recognition complex subunit 4 (orcD), found in Dictyostelium discoideum (Social amoeba).